Consider the following 194-residue polypeptide: Probable GTP-binding protein EngB (194 aa).

The EngB-type G domain maps to G22–I194. GTP is bound by residues G30–S37, G57–T61, D75–G78, T142–D145, and F175–S177. The Mg(2+) site is built by S37 and T59.

Belongs to the TRAFAC class TrmE-Era-EngA-EngB-Septin-like GTPase superfamily. EngB GTPase family. It depends on Mg(2+) as a cofactor.

Functionally, necessary for normal cell division and for the maintenance of normal septation. In Leuconostoc mesenteroides subsp. mesenteroides (strain ATCC 8293 / DSM 20343 / BCRC 11652 / CCM 1803 / JCM 6124 / NCDO 523 / NBRC 100496 / NCIMB 8023 / NCTC 12954 / NRRL B-1118 / 37Y), this protein is Probable GTP-binding protein EngB.